The primary structure comprises 520 residues: 2-isopropylmalate synthase (520 aa).

Residues 12–274 enclose the Pyruvate carboxyltransferase domain; the sequence is IRIFDTTLRD…DSAINTPRIV (263 aa). Mn(2+) contacts are provided by Asp-21, His-209, His-211, and Asn-245. The tract at residues 396-520 is regulatory domain; the sequence is RLASMTISDV…VVAGKTAAVA (125 aa).

The protein belongs to the alpha-IPM synthase/homocitrate synthase family. LeuA type 1 subfamily. Homodimer. Mn(2+) serves as cofactor.

The protein resides in the cytoplasm. It carries out the reaction 3-methyl-2-oxobutanoate + acetyl-CoA + H2O = (2S)-2-isopropylmalate + CoA + H(+). It participates in amino-acid biosynthesis; L-leucine biosynthesis; L-leucine from 3-methyl-2-oxobutanoate: step 1/4. Functionally, catalyzes the condensation of the acetyl group of acetyl-CoA with 3-methyl-2-oxobutanoate (2-ketoisovalerate) to form 3-carboxy-3-hydroxy-4-methylpentanoate (2-isopropylmalate). This is 2-isopropylmalate synthase from Xanthomonas axonopodis pv. citri (strain 306).